Reading from the N-terminus, the 296-residue chain is UDP-N-acetylenolpyruvoylglucosamine reductase (296 aa).

The FAD-binding PCMH-type domain occupies 18-189 (LGGRALAEVR…TGADIVLRRG (172 aa)). Residue Arg-166 is part of the active site. Cys-218 acts as the Proton donor in catalysis. Residue Glu-289 is part of the active site.

Belongs to the MurB family. Requires FAD as cofactor.

It is found in the cytoplasm. It carries out the reaction UDP-N-acetyl-alpha-D-muramate + NADP(+) = UDP-N-acetyl-3-O-(1-carboxyvinyl)-alpha-D-glucosamine + NADPH + H(+). It functions in the pathway cell wall biogenesis; peptidoglycan biosynthesis. Its function is as follows. Cell wall formation. The protein is UDP-N-acetylenolpyruvoylglucosamine reductase of Nitratidesulfovibrio vulgaris (strain ATCC 29579 / DSM 644 / CCUG 34227 / NCIMB 8303 / VKM B-1760 / Hildenborough) (Desulfovibrio vulgaris).